A 247-amino-acid polypeptide reads, in one-letter code: MKFLVDVHAHTIASTHAYSTVHDYLAVAKEKGIKLFAITDHGPDMADAPHFWHFVNMRVLPRIVDGIGVLRGIEANIKNENGDIDFFGSYLNELDIVLAGFHEPVFQPSTQTTHTQALVNCIESGNVDIISHPGNPAYPIDIKRVAEVAATHNVALEINNSSFLTSRKGSLKNCTAIARAVKEAGGYLVLGSDSHVAFSLGGFDKAIELIQEVDFPIERILNHSPKALLEFLTSRGHKGMDEYAEIV.

9 residues coordinate Zn(2+): histidine 8, histidine 10, histidine 16, histidine 41, glutamate 74, histidine 102, histidine 132, aspartate 193, and histidine 195.

This sequence belongs to the PHP family. Requires Zn(2+) as cofactor.

In Shewanella loihica (strain ATCC BAA-1088 / PV-4), this protein is Probable phosphatase Shew_1420.